The primary structure comprises 254 residues: Imidazole glycerol phosphate synthase subunit HisF (254 aa).

Catalysis depends on residues Asp-12 and Asp-131.

This sequence belongs to the HisA/HisF family. Heterodimer of HisH and HisF.

Its subcellular location is the cytoplasm. It catalyses the reaction 5-[(5-phospho-1-deoxy-D-ribulos-1-ylimino)methylamino]-1-(5-phospho-beta-D-ribosyl)imidazole-4-carboxamide + L-glutamine = D-erythro-1-(imidazol-4-yl)glycerol 3-phosphate + 5-amino-1-(5-phospho-beta-D-ribosyl)imidazole-4-carboxamide + L-glutamate + H(+). It functions in the pathway amino-acid biosynthesis; L-histidine biosynthesis; L-histidine from 5-phospho-alpha-D-ribose 1-diphosphate: step 5/9. Its function is as follows. IGPS catalyzes the conversion of PRFAR and glutamine to IGP, AICAR and glutamate. The HisF subunit catalyzes the cyclization activity that produces IGP and AICAR from PRFAR using the ammonia provided by the HisH subunit. The chain is Imidazole glycerol phosphate synthase subunit HisF from Janthinobacterium sp. (strain Marseille) (Minibacterium massiliensis).